A 103-amino-acid chain; its full sequence is MYAIVRTGGKQYQVACGDQLRVEKLEGNVGDSLDLTDVLMLVDGDNVQVGQPVLENAKVVAKIAEQGRGKKIIIFKKKRRKGYRLKQGHRQSYTALKIEEISA.

The protein belongs to the bacterial ribosomal protein bL21 family. In terms of assembly, part of the 50S ribosomal subunit. Contacts protein L20.

Functionally, this protein binds to 23S rRNA in the presence of protein L20. The sequence is that of Large ribosomal subunit protein bL21 from Desulfotalea psychrophila (strain LSv54 / DSM 12343).